The following is a 396-amino-acid chain: Probable peptidoglycan glycosyltransferase FtsW (396 aa).

Residues 1–27 (MPFLDKVKQQYEDWTRITPSNLLYDRA) lie on the Cytoplasmic side of the membrane. The helical transmembrane segment at 28 to 48 (LLLLFFVLLLIGLLAVSSASI) threads the bilayer. Topologically, residues 49 to 64 (PVGTRLFKDPFYFAKR) are periplasmic. The helical transmembrane segment at 65–85 (DAIYVFLSCVTCYLCVQVPME) threads the bilayer. Topologically, residues 86-93 (KWEQWHVR) are cytoplasmic. The chain crosses the membrane as a helical span at residues 94–114 (LFAFAIFLLILVLIPGIGLSV). The Periplasmic portion of the chain corresponds to 115–122 (NGARRWIP). The chain crosses the membrane as a helical span at residues 123–143 (MVLFNFQPAEFAKLALTCFLA). The Cytoplasmic portion of the chain corresponds to 144–157 (SYFTRKYDEVRSRK). Residues 158-178 (LSAFKPFALMGLMGLFLLSQP) form a helical membrane-spanning segment. The Periplasmic portion of the chain corresponds to 179-183 (DLGST). 2 helical membrane-spanning segments follow: residues 184-204 (VVLF…FWQF) and 205-225 (VGLM…SAYR). Residues 226–285 (LKRFTGFLDPFKDPYGTGFQLSNSLMAFGRGEWVGEGLGNSIQKLEYLPEAHTDFVMAVV) are Periplasmic-facing. A helical membrane pass occupies residues 286 to 306 (GEEFGFLGILVIVILLGLLIF). Residues 307-323 (RAMKIGRESLLLEQRFK) are Cytoplasmic-facing. The helical transmembrane segment at 324–344 (GFFAFGISFWIFFQGFVNLGM) threads the bilayer. The Periplasmic portion of the chain corresponds to 345 to 355 (SLGLLPTKGLT). Residues 356–376 (FPLISYGGSSLIIMSMTIGLL) traverse the membrane as a helical segment. The Cytoplasmic segment spans residues 377-396 (LRIDHENRLMRIGQARLRDD).

The protein belongs to the SEDS family. FtsW subfamily.

The protein localises to the cell inner membrane. It catalyses the reaction [GlcNAc-(1-&gt;4)-Mur2Ac(oyl-L-Ala-gamma-D-Glu-L-Lys-D-Ala-D-Ala)](n)-di-trans,octa-cis-undecaprenyl diphosphate + beta-D-GlcNAc-(1-&gt;4)-Mur2Ac(oyl-L-Ala-gamma-D-Glu-L-Lys-D-Ala-D-Ala)-di-trans,octa-cis-undecaprenyl diphosphate = [GlcNAc-(1-&gt;4)-Mur2Ac(oyl-L-Ala-gamma-D-Glu-L-Lys-D-Ala-D-Ala)](n+1)-di-trans,octa-cis-undecaprenyl diphosphate + di-trans,octa-cis-undecaprenyl diphosphate + H(+). It participates in cell wall biogenesis; peptidoglycan biosynthesis. Its function is as follows. Peptidoglycan polymerase that is essential for cell division. The sequence is that of Probable peptidoglycan glycosyltransferase FtsW from Pasteurella multocida (strain Pm70).